Here is a 522-residue protein sequence, read N- to C-terminus: Anthranilate synthase component 1 (522 aa).

L-tryptophan contacts are provided by residues Ser-40 and 292–294 (PYM). 329-330 (GT) serves as a coordination point for chorismate. Glu-362 lines the Mg(2+) pocket. Chorismate is bound by residues Tyr-450, Arg-470, 484–486 (GAG), and Gly-486. Position 499 (Glu-499) interacts with Mg(2+).

It belongs to the anthranilate synthase component I family. In terms of assembly, heterotetramer consisting of two non-identical subunits: a beta subunit (TrpG) and a large alpha subunit (TrpE). Mg(2+) is required as a cofactor.

It catalyses the reaction chorismate + L-glutamine = anthranilate + pyruvate + L-glutamate + H(+). It functions in the pathway amino-acid biosynthesis; L-tryptophan biosynthesis; L-tryptophan from chorismate: step 1/5. Its activity is regulated as follows. Feedback inhibited by tryptophan. In terms of biological role, part of a heterotetrameric complex that catalyzes the two-step biosynthesis of anthranilate, an intermediate in the biosynthesis of L-tryptophan. In the first step, the glutamine-binding beta subunit (TrpG) of anthranilate synthase (AS) provides the glutamine amidotransferase activity which generates ammonia as a substrate that, along with chorismate, is used in the second step, catalyzed by the large alpha subunit of AS (TrpE) to produce anthranilate. In the absence of TrpG, TrpE can synthesize anthranilate directly from chorismate and high concentrations of ammonia. This is Anthranilate synthase component 1 (trpE) from Buchnera aphidicola subsp. Baizongia pistaciae (strain Bp).